The sequence spans 215 residues: Urease accessory protein UreG 2 (215 aa).

11 to 18 (GPVGSGKT) lines the GTP pocket.

The protein belongs to the SIMIBI class G3E GTPase family. UreG subfamily. As to quaternary structure, homodimer. UreD, UreF and UreG form a complex that acts as a GTP-hydrolysis-dependent molecular chaperone, activating the urease apoprotein by helping to assemble the nickel containing metallocenter of UreC. The UreE protein probably delivers the nickel.

The protein localises to the cytoplasm. Its function is as follows. Facilitates the functional incorporation of the urease nickel metallocenter. This process requires GTP hydrolysis, probably effectuated by UreG. The polypeptide is Urease accessory protein UreG 2 (Methylorubrum populi (strain ATCC BAA-705 / NCIMB 13946 / BJ001) (Methylobacterium populi)).